The chain runs to 176 residues: dCTP deaminase (176 aa).

DCTP is bound by residues 99-104 (RSTLAR) and aspartate 115. Glutamate 125 serves as the catalytic Proton donor/acceptor. Glutamine 163 contacts dCTP.

It belongs to the dCTP deaminase family. As to quaternary structure, homotrimer.

It carries out the reaction dCTP + H2O + H(+) = dUTP + NH4(+). It functions in the pathway pyrimidine metabolism; dUMP biosynthesis; dUMP from dCTP (dUTP route): step 1/2. Catalyzes the deamination of dCTP to dUTP. This Pyrobaculum arsenaticum (strain DSM 13514 / JCM 11321 / PZ6) protein is dCTP deaminase.